The following is a 427-amino-acid chain: ATP-sensitive inward rectifier potassium channel 12 (427 aa).

Topologically, residues 1–77 (MTAASRANPY…LADMFTTCVD (77 aa)) are cytoplasmic. Cys75 is subject to S-nitrosocysteine. Residues 78 to 104 (IRWRYMLLIFSLAFLASWLLFGIIFWV) traverse the membrane as a helical segment. Arg79 and Arg81 together coordinate a 1,2-diacyl-sn-glycero-3-phospho-(1D-myo-inositol-4,5-bisphosphate). Residues 105–129 (IAVAHGDLEPAEGRGRTPCVLQVHG) are Extracellular-facing. A disulfide bridge links Cys123 with Cys155. The helical; Pore-forming intramembrane region spans 130–146 (FMAAFLFSIETQTTIGY). Thr143, Ile144, Gly145, and Tyr146 together coordinate K(+). The Selectivity filter motif lies at 143-148 (TIGYGL). Residues 147-155 (GLRCVTEEC) lie on the Extracellular side of the membrane. A helical transmembrane segment spans residues 156-183 (PVAVFMVVAQSIVGCIIDSFMIGAIMAK). A 1,2-diacyl-sn-glycero-3-phospho-(1D-myo-inositol-4,5-bisphosphate) contacts are provided by Lys183 and Lys188. The Cytoplasmic portion of the chain corresponds to 184–427 (MARPKKRAQT…ERPYRRESEI (244 aa)). The interval 387–427 (DEEDEVATDRDGRSPQPEHDFDRLQASSAALERPYRRESEI) is disordered. Over residues 393 to 409 (ATDRDGRSPQPEHDFDR) the composition is skewed to basic and acidic residues. The PDZ-binding signature appears at 425-427 (SEI).

It belongs to the inward rectifier-type potassium channel (TC 1.A.2.1) family. KCNJ12 subfamily. Homotetramer. Forms heteromer with KCNJ4. Can form heteromeric channels with Kir2.6/KCNJ18. Association, via its PDZ-recognition domain, with LIN7A, LIN7B, LIN7C, DLG1, CASK and APBA1 plays a key role in its localization and trafficking. In terms of tissue distribution, highest level in cerebellum.

It is found in the membrane. The protein resides in the cell membrane. Its subcellular location is the sarcolemma. The protein localises to the T-tubule. The enzyme catalyses K(+)(in) = K(+)(out). With respect to regulation, activated by phosphatidylinositol 4,5-biphosphate (PtdIns(4,5)P2). PtdIns(4,5)P2 binding to the cytoplasmic side of the channel triggers a conformation change leading to channel opening. Inhibited by Ba(2+). Its function is as follows. Inward rectifying potassium channel that probably participates in controlling the resting membrane potential in electrically excitable cells. It probably participates in establishing action potential waveform and excitability of neuronal and muscle tissues. Inward rectifier potassium channels are characterized by a greater tendency to allow potassium to flow into the cell rather than out of it. Their voltage dependence is regulated by the concentration of extracellular potassium; as external potassium is raised, the voltage range of the channel opening shifts to more positive voltages. The inward rectification is mainly due to the blockage of outward current by internal magnesium. This chain is ATP-sensitive inward rectifier potassium channel 12 (Kcnj12), found in Mus musculus (Mouse).